The sequence spans 422 residues: CinA-like protein (422 aa).

Belongs to the CinA family.

The chain is CinA-like protein from Mycolicibacterium gilvum (strain PYR-GCK) (Mycobacterium gilvum (strain PYR-GCK)).